The sequence spans 274 residues: Diaminopimelate epimerase (274 aa).

Substrate-binding residues include asparagine 11, glutamine 44, and asparagine 64. Cysteine 73 acts as the Proton donor in catalysis. Substrate contacts are provided by residues glycine 74–asparagine 75, asparagine 157, asparagine 190, and glutamate 208–arginine 209. Catalysis depends on cysteine 217, which acts as the Proton acceptor. Substrate is bound at residue glycine 218–serine 219.

Belongs to the diaminopimelate epimerase family. In terms of assembly, homodimer.

The protein localises to the cytoplasm. The catalysed reaction is (2S,6S)-2,6-diaminopimelate = meso-2,6-diaminopimelate. Its pathway is amino-acid biosynthesis; L-lysine biosynthesis via DAP pathway; DL-2,6-diaminopimelate from LL-2,6-diaminopimelate: step 1/1. Functionally, catalyzes the stereoinversion of LL-2,6-diaminopimelate (L,L-DAP) to meso-diaminopimelate (meso-DAP), a precursor of L-lysine and an essential component of the bacterial peptidoglycan. This Actinobacillus pleuropneumoniae serotype 3 (strain JL03) protein is Diaminopimelate epimerase.